The following is a 380-amino-acid chain: SAM and SH3 domain-containing protein 3 (380 aa).

Disordered stretches follow at residues 1–76 and 96–168; these read MLRR…GKKW and LSEE…SPAP. Positions 22 to 41 are enriched in low complexity; the sequence is LQRSSSFKDFAKSKPSSPVV. 3 positions are modified to phosphoserine: S27, S34, and S42. Residue T61 is modified to Phosphothreonine. Position 97 is a phosphoserine (S97). T103 is subject to Phosphothreonine. Phosphoserine is present on S110. Position 112 is a phosphothreonine (T112). Residues S113 and S120 each carry the phosphoserine modification. Residues 141–150 show a composition bias toward polar residues; sequence LSRQTSTGSE. Residues 173–234 enclose the SH3 domain; that stretch reads PFCGRARVHT…KFIYVDVLPE (62 aa). The SAM domain occupies 252 to 316; sequence PKPKTLHELL…LTAAELLLDY (65 aa). T318 is modified (phosphothreonine). Residues 318-327 are compositionally biased toward acidic residues; it reads TGSEEAEEGA. Residues 318-380 are disordered; it reads TGSEEAEEGA…LQGLSLSGAP (63 aa). A Phosphoserine modification is found at S320. Polar residues predominate over residues 369 to 380; the sequence is EQLQGLSLSGAP.

Preferentially expressed in lymphoid tissues. Expressed in bone marrow, thymus, spleen, lymph nodes and Peyer patches of gut. In the spleen and lymph nodes, expressed in both T- and B-cells. In the thymus, in the medulla and cortex.

Its function is as follows. May function as a signaling adapter protein in lymphocytes. The chain is SAM and SH3 domain-containing protein 3 (Sash3) from Mus musculus (Mouse).